A 540-amino-acid chain; its full sequence is Chaperonin GroEL (540 aa).

ATP-binding positions include 29–32 (TLGP), 86–90 (DGTTT), Gly-413, 476–478 (NAA), and Asp-492.

This sequence belongs to the chaperonin (HSP60) family. As to quaternary structure, forms a cylinder of 14 subunits composed of two heptameric rings stacked back-to-back. Interacts with the co-chaperonin GroES.

It is found in the cytoplasm. The catalysed reaction is ATP + H2O + a folded polypeptide = ADP + phosphate + an unfolded polypeptide.. In terms of biological role, together with its co-chaperonin GroES, plays an essential role in assisting protein folding. The GroEL-GroES system forms a nano-cage that allows encapsulation of the non-native substrate proteins and provides a physical environment optimized to promote and accelerate protein folding. The protein is Chaperonin GroEL of Streptococcus constellatus.